Here is a 208-residue protein sequence, read N- to C-terminus: Protein-L-isoaspartate O-methyltransferase (208 aa).

Ser-59 is a catalytic residue.

It belongs to the methyltransferase superfamily. L-isoaspartyl/D-aspartyl protein methyltransferase family.

The protein localises to the cytoplasm. The enzyme catalyses [protein]-L-isoaspartate + S-adenosyl-L-methionine = [protein]-L-isoaspartate alpha-methyl ester + S-adenosyl-L-homocysteine. Catalyzes the methyl esterification of L-isoaspartyl residues in peptides and proteins that result from spontaneous decomposition of normal L-aspartyl and L-asparaginyl residues. It plays a role in the repair and/or degradation of damaged proteins. In Pectobacterium atrosepticum (strain SCRI 1043 / ATCC BAA-672) (Erwinia carotovora subsp. atroseptica), this protein is Protein-L-isoaspartate O-methyltransferase.